A 119-amino-acid chain; its full sequence is Large ribosomal subunit protein bL17 (119 aa).

It belongs to the bacterial ribosomal protein bL17 family. Part of the 50S ribosomal subunit. Contacts protein L32.

The chain is Large ribosomal subunit protein bL17 from Acholeplasma laidlawii (strain PG-8A).